A 269-amino-acid chain; its full sequence is Hydroxyethylthiazole kinase (269 aa).

Position 41 (Met-41) interacts with substrate. Residues Arg-117 and Ser-165 each contribute to the ATP site. Gly-192 contacts substrate.

It belongs to the Thz kinase family. Mg(2+) is required as a cofactor.

The catalysed reaction is 5-(2-hydroxyethyl)-4-methylthiazole + ATP = 4-methyl-5-(2-phosphooxyethyl)-thiazole + ADP + H(+). It participates in cofactor biosynthesis; thiamine diphosphate biosynthesis; 4-methyl-5-(2-phosphoethyl)-thiazole from 5-(2-hydroxyethyl)-4-methylthiazole: step 1/1. In terms of biological role, catalyzes the phosphorylation of the hydroxyl group of 4-methyl-5-beta-hydroxyethylthiazole (THZ). The sequence is that of Hydroxyethylthiazole kinase from Actinobacillus succinogenes (strain ATCC 55618 / DSM 22257 / CCUG 43843 / 130Z).